A 453-amino-acid chain; its full sequence is uncharacterized protein (453 aa).

To yeast RIT1.

This is an uncharacterized protein from Schizosaccharomyces pombe (strain 972 / ATCC 24843) (Fission yeast).